A 374-amino-acid polypeptide reads, in one-letter code: All-trans-retinol dehydrogenase [NAD(+)] ADH7 (374 aa).

At Met1 the chain carries N-acetylmethionine. 7 residues coordinate Zn(2+): Cys47, His68, Cys98, Cys101, Cys104, Cys112, and Cys174. Residues 199–204 (GLGGVG), Asp223, Lys228, 292–294 (VGA), and Arg369 each bind NAD(+).

Belongs to the zinc-containing alcohol dehydrogenase family. Class-IV subfamily. In terms of assembly, homodimer. Requires Zn(2+) as cofactor. In terms of tissue distribution, preferentially expressed in stomach.

It localises to the cytoplasm. It catalyses the reaction a primary alcohol + NAD(+) = an aldehyde + NADH + H(+). It carries out the reaction 10-hydroxydecanoate + NAD(+) = 10-oxodecanoate + NADH + H(+). The catalysed reaction is all-trans-retinol + NAD(+) = all-trans-retinal + NADH + H(+). The enzyme catalyses 9-cis-retinol + NAD(+) = 9-cis-retinal + NADH + H(+). It catalyses the reaction all-trans-3,4-didehydroretinol + NAD(+) = all-trans-3,4-didehydroretinal + NADH + H(+). It carries out the reaction all-trans-4-hydroxyretinol + NAD(+) = all-trans-4-hydroxyretinal + NADH + H(+). The catalysed reaction is all-trans-4-oxoretinol + NAD(+) = all-trans-4-oxoretinal + NADH + H(+). The enzyme catalyses 12-hydroxydodecanoate + NAD(+) = 12-oxododecanoate + NADH + H(+). It catalyses the reaction 16-hydroxyhexadecanoate + NAD(+) = 16-oxohexadecanoate + NADH + H(+). It carries out the reaction hexan-1-ol + NAD(+) = hexanal + NADH + H(+). The catalysed reaction is (E)-hex-2-en-1-ol + NAD(+) = (E)-hex-2-enal + NADH + H(+). The enzyme catalyses (E)-4-hydroxynon-2-en-1-ol + NAD(+) = (E)-4-hydroxynon-2-enal + NADH + H(+). Its activity is regulated as follows. Retinol oxidation is inhibited by the detergent Tween 80. Ethanol inhibits both all-trans-retinol and 9-cis-retinol oxidation. 13-cis-retinol is an effective competitive inhibitor of the 9-cis-retinol oxidation. All-trans-retinoic acid is a powerful inhibitor of all-trans-retinol oxidation. 13-cis-retinoic acid is a powerful inhibitor of all-trans-retinol oxidation. Cimetidine and ranitidine inhibited ethanol oxidation. Catalyzes the NAD-dependent oxidation of all-trans-retinol, alcohol, aldehyde and omega-hydroxy fatty acids and their derivatives. Oxidizes preferentially all trans-retinol, all-trans-4-hydroxyretinol, 9-cis-retinol, 2-hexenol, and long chain omega-hydroxy fatty acids such as juniperic acid. In vitro can also catalyze the NADH-dependent reduction of all-trans-retinal and aldehydes and their derivatives. Reduces preferentially all trans-retinal, all-trans-4-oxoretinal and hexanal. Catalyzes in the oxidative direction with higher efficiency. Therefore may participate in retinoid metabolism, fatty acid omega-oxidation, and elimination of cytotoxic aldehydes produced by lipid peroxidation. The chain is All-trans-retinol dehydrogenase [NAD(+)] ADH7 (Adh7) from Rattus norvegicus (Rat).